Consider the following 147-residue polypeptide: Ubiquitin-conjugating enzyme E2 D2B (147 aa).

The UBC core domain maps to 1-147; it reads MALKRIHKEL…AREWTQKYAM (147 aa). Cys85 serves as the catalytic Glycyl thioester intermediate.

Belongs to the ubiquitin-conjugating enzyme family. Interacts with CNOT4 (via RING domain). In terms of tissue distribution, testis-specific. Mainly expressed in the round spermatids (at protein level).

It catalyses the reaction S-ubiquitinyl-[E1 ubiquitin-activating enzyme]-L-cysteine + [E2 ubiquitin-conjugating enzyme]-L-cysteine = [E1 ubiquitin-activating enzyme]-L-cysteine + S-ubiquitinyl-[E2 ubiquitin-conjugating enzyme]-L-cysteine.. The protein operates within protein modification; protein ubiquitination. Catalyzes the covalent attachment of ubiquitin to other proteins. Mediates the selective degradation of short-lived and abnormal proteins. Functions in the E6/E6-AP-induced ubiquitination of p53/TP53. Mediates ubiquitination of PEX5 and SQSTM1 and autoubiquitination of STUB1 and TRAF6. Involved in the signal-induced conjugation and subsequent degradation of NFKBIA, FBXW2-mediated GCM1 ubiquitination and degradation, MDM2-dependent degradation of p53/TP53 and the activation of MAVS in the mitochondria by RIGI in response to viral infection Plays a role in early maturation of the testis. The chain is Ubiquitin-conjugating enzyme E2 D2B (Ube2d2b) from Rattus norvegicus (Rat).